The sequence spans 335 residues: Probable phosphoglycerate mutase ARB_03491 (335 aa).

The first 24 residues, 1–24 (MAGRILLGLTLLATSLPLLAMGDA), serve as a signal peptide directing secretion. The active-site Tele-phosphohistidine intermediate is the histidine 108. Glutamate 211 acts as the Proton donor/acceptor in catalysis.

The protein belongs to the phosphoglycerate mutase family.

Its subcellular location is the secreted. Probable phosphomutase that may have a function related to the manipulation of phosphate groups on carbohydrates. This Arthroderma benhamiae (strain ATCC MYA-4681 / CBS 112371) (Trichophyton mentagrophytes) protein is Probable phosphoglycerate mutase ARB_03491.